The primary structure comprises 396 residues: Putative ribosomal RNA large subunit methyltransferase YwbD (396 aa).

Residues Met-1–Phe-79 form the PUA domain.

Belongs to the methyltransferase superfamily. RlmI family.

Its subcellular location is the cytoplasm. The polypeptide is Putative ribosomal RNA large subunit methyltransferase YwbD (ywbD) (Bacillus subtilis (strain 168)).